We begin with the raw amino-acid sequence, 379 residues long: 1-deoxy-D-xylulose 5-phosphate reductoisomerase (379 aa).

Residues Thr-10, Gly-11, Ser-12, Ile-13, Arg-38, Asn-39, and Asn-121 each coordinate NADPH. Lys-122 contacts 1-deoxy-D-xylulose 5-phosphate. Glu-123 lines the NADPH pocket. Residue Asp-147 participates in Mn(2+) binding. 4 residues coordinate 1-deoxy-D-xylulose 5-phosphate: Ser-148, Glu-149, Ser-173, and His-196. Glu-149 is a binding site for Mn(2+). Gly-202 contributes to the NADPH binding site. Residues Ser-209, Asn-214, Lys-215, and Glu-218 each contribute to the 1-deoxy-D-xylulose 5-phosphate site. Glu-218 contributes to the Mn(2+) binding site.

The protein belongs to the DXR family. Mg(2+) is required as a cofactor. Requires Mn(2+) as cofactor.

It catalyses the reaction 2-C-methyl-D-erythritol 4-phosphate + NADP(+) = 1-deoxy-D-xylulose 5-phosphate + NADPH + H(+). Its pathway is isoprenoid biosynthesis; isopentenyl diphosphate biosynthesis via DXP pathway; isopentenyl diphosphate from 1-deoxy-D-xylulose 5-phosphate: step 1/6. Its function is as follows. Catalyzes the NADPH-dependent rearrangement and reduction of 1-deoxy-D-xylulose-5-phosphate (DXP) to 2-C-methyl-D-erythritol 4-phosphate (MEP). This is 1-deoxy-D-xylulose 5-phosphate reductoisomerase from Chlamydia muridarum (strain MoPn / Nigg).